A 313-amino-acid polypeptide reads, in one-letter code: Porphobilinogen deaminase (313 aa).

Cys242 is subject to S-(dipyrrolylmethanemethyl)cysteine.

This sequence belongs to the HMBS family. As to quaternary structure, monomer. The cofactor is dipyrromethane.

It catalyses the reaction 4 porphobilinogen + H2O = hydroxymethylbilane + 4 NH4(+). Its pathway is porphyrin-containing compound metabolism; protoporphyrin-IX biosynthesis; coproporphyrinogen-III from 5-aminolevulinate: step 2/4. Tetrapolymerization of the monopyrrole PBG into the hydroxymethylbilane pre-uroporphyrinogen in several discrete steps. This is Porphobilinogen deaminase from Pseudomonas paraeruginosa (strain DSM 24068 / PA7) (Pseudomonas aeruginosa (strain PA7)).